Here is a 243-residue protein sequence, read N- to C-terminus: tRNA (guanine-N(1)-)-methyltransferase (243 aa).

S-adenosyl-L-methionine contacts are provided by residues Gly-111 and Ile-131–Leu-136.

This sequence belongs to the RNA methyltransferase TrmD family. As to quaternary structure, homodimer.

The protein localises to the cytoplasm. The catalysed reaction is guanosine(37) in tRNA + S-adenosyl-L-methionine = N(1)-methylguanosine(37) in tRNA + S-adenosyl-L-homocysteine + H(+). In terms of biological role, specifically methylates guanosine-37 in various tRNAs. The sequence is that of tRNA (guanine-N(1)-)-methyltransferase from Brevibacillus brevis (strain 47 / JCM 6285 / NBRC 100599).